A 405-amino-acid chain; its full sequence is Secreted aspartic protease 8 (405 aa).

A signal peptide spans M1–G23. The propeptide at L24 to R75 is activation peptide. Residues T52–V78 form a disordered region. The span at H58 to Q70 shows a compositional bias: low complexity. The Peptidase A1 domain maps to Y89 to A392. D107 is an active-site residue. D107–G109 provides a ligand contact to pepstatin A. C122 and C134 are disulfide-bonded. Residues E160–D161 and D292–T296 contribute to the pepstatin A site. D292 is a catalytic residue. Cysteines 327 and 358 form a disulfide.

Belongs to the peptidase A1 family. In terms of assembly, monomer.

It localises to the secreted. The enzyme catalyses Preferential cleavage at the carboxyl of hydrophobic amino acids, but fails to cleave 15-Leu-|-Tyr-16, 16-Tyr-|-Leu-17 and 24-Phe-|-Phe-25 of insulin B chain. Activates trypsinogen, and degrades keratin.. Secreted aspartic peptidases (SAPs) are a group of ten acidic hydrolases considered as key virulence factors. These enzymes supply the fungus with nutrient amino acids as well as are able to degrade the selected host's proteins involved in the immune defense. Moreover, acts toward human hemoglobin though limited proteolysis to generate a variety of antimicrobial hemocidins, enabling to compete with the other microorganisms of the same physiological niche using the microbicidal peptides generated from the host protein. Functionally, plays a key role in defense against host by cleaving histatin-5 (Hst 5), a peptide from human saliva that carries out fungicidal activity. The cleavage rate decreases in an order of SAP2 &gt; SAP9 &gt; SAP3 &gt; SAP7 &gt; SAP4 &gt; SAP1 &gt; SAP8. The hydrolysis of Hst 5 by SAP8 causes production of the DSHAKRHHGY, HHSHRGY and FHEKHHSHRGY peptides. In Candida albicans (strain SC5314 / ATCC MYA-2876) (Yeast), this protein is Secreted aspartic protease 8.